Here is a 149-residue protein sequence, read N- to C-terminus: Arginine repressor (149 aa).

It belongs to the ArgR family.

The protein localises to the cytoplasm. Its pathway is amino-acid biosynthesis; L-arginine biosynthesis [regulation]. Regulates arginine biosynthesis genes. The polypeptide is Arginine repressor (Bacillus mycoides (strain KBAB4) (Bacillus weihenstephanensis)).